Here is a 349-residue protein sequence, read N- to C-terminus: Phloroglucinol synthase (349 aa).

Residue cysteine 138 is part of the active site.

This sequence belongs to the thiolase-like superfamily. Chalcone/stilbene synthases family.

It catalyses the reaction 3 malonyl-CoA + 3 H(+) = 1,3,5-trihydroxybenzene + 3 CO2 + 3 CoA. It functions in the pathway antibiotic biosynthesis. Functionally, type III polyketide synthase that catalyzes the synthesis of phloroglucinol from three molecules of malonyl-CoA. In addition to its ability to produce phloroglucinol from malonyl-CoA, it exhibits broad substrate specificity, accepting C4-C12 aliphatic acyl-CoAs and phenylacetyl-CoA as the starters to form C6-polyoxoalkylated alpha-pyrones from sequential condensation with malonyl-CoA. The polypeptide is Phloroglucinol synthase (Pseudomonas fluorescens (strain ATCC BAA-477 / NRRL B-23932 / Pf-5)).